The primary structure comprises 408 residues: Phosphoglycerate kinase (408 aa).

Substrate contacts are provided by residues 24-26 (DLN), Arg-39, 62-65 (HLGR), Arg-121, and Arg-161. ATP-binding positions include Lys-211, Gly-307, Glu-338, and 364–367 (GGDS).

Belongs to the phosphoglycerate kinase family. In terms of assembly, monomer.

It is found in the cytoplasm. It carries out the reaction (2R)-3-phosphoglycerate + ATP = (2R)-3-phospho-glyceroyl phosphate + ADP. It functions in the pathway carbohydrate degradation; glycolysis; pyruvate from D-glyceraldehyde 3-phosphate: step 2/5. This chain is Phosphoglycerate kinase, found in Paenarthrobacter aurescens (strain TC1).